The chain runs to 365 residues: S-adenosylmethionine:tRNA ribosyltransferase-isomerase (365 aa).

This sequence belongs to the QueA family. As to quaternary structure, monomer.

The protein localises to the cytoplasm. It catalyses the reaction 7-aminomethyl-7-carbaguanosine(34) in tRNA + S-adenosyl-L-methionine = epoxyqueuosine(34) in tRNA + adenine + L-methionine + 2 H(+). The protein operates within tRNA modification; tRNA-queuosine biosynthesis. Functionally, transfers and isomerizes the ribose moiety from AdoMet to the 7-aminomethyl group of 7-deazaguanine (preQ1-tRNA) to give epoxyqueuosine (oQ-tRNA). The polypeptide is S-adenosylmethionine:tRNA ribosyltransferase-isomerase (Rickettsia africae (strain ESF-5)).